Here is a 457-residue protein sequence, read N- to C-terminus: MSNSAKSVVILAAGKGTRMYSDLPKVLHLLAGKPMVQHVIDTAMALGAKNVHLVYGHGGDLIEQTLSDQTLNWVLQAEQLGTGHAMQQAAPHFAGDEDILILYGDVPLIGADTLERLLAVKPEGGIGLLTAILDNPTGYGRIVRENGEVTGIIEQKDATEEQRKINEINTGILVANGSDLKRWLSQLDNNNVQGEYYLTDVIALAYKEGRKIEAVHPTRLSEMEGVNNRLQLSALERIYQSEQAEQLLLAGVMLLDPARFDLRGTLIHGRDVVIDTNVIIEGNVTLGNNVQIGTGCVLKNCIIGDDSIISPYTIVEDSEMETGCTVGPFARLRPGSKLAEKAHVGNFVEMKKSYLGKGSKAGHLTYLGDADIGRDVNIGAGTITCNYDGANKFKTIIGDNVFVGSDTQLVAPVIVAKGATIGAGTTVTKNIAENELVVSRTKQTHIQGWKRPVKEKK.

Residues 1-229 (MSNSAKSVVI…LSEMEGVNNR (229 aa)) form a pyrophosphorylase region. UDP-N-acetyl-alpha-D-glucosamine is bound by residues 11 to 14 (LAAG), Lys25, Gln76, 81 to 82 (GT), 103 to 105 (YGD), Gly140, Glu154, Asn169, and Asn227. Asp105 is a Mg(2+) binding site. Position 227 (Asn227) interacts with Mg(2+). Residues 230 to 250 (LQLSALERIYQSEQAEQLLLA) form a linker region. The N-acetyltransferase stretch occupies residues 251 to 457 (GVMLLDPARF…GWKRPVKEKK (207 aa)). UDP-N-acetyl-alpha-D-glucosamine-binding residues include Arg333 and Lys351. The Proton acceptor role is filled by His363. UDP-N-acetyl-alpha-D-glucosamine is bound by residues Tyr366 and Asn377. Residues Ala380, 386-387 (NY), Ser405, Ala423, and Arg440 each bind acetyl-CoA.

It in the N-terminal section; belongs to the N-acetylglucosamine-1-phosphate uridyltransferase family. The protein in the C-terminal section; belongs to the transferase hexapeptide repeat family. As to quaternary structure, homotrimer. Mg(2+) serves as cofactor.

The protein localises to the cytoplasm. It catalyses the reaction alpha-D-glucosamine 1-phosphate + acetyl-CoA = N-acetyl-alpha-D-glucosamine 1-phosphate + CoA + H(+). The enzyme catalyses N-acetyl-alpha-D-glucosamine 1-phosphate + UTP + H(+) = UDP-N-acetyl-alpha-D-glucosamine + diphosphate. It functions in the pathway nucleotide-sugar biosynthesis; UDP-N-acetyl-alpha-D-glucosamine biosynthesis; N-acetyl-alpha-D-glucosamine 1-phosphate from alpha-D-glucosamine 6-phosphate (route II): step 2/2. Its pathway is nucleotide-sugar biosynthesis; UDP-N-acetyl-alpha-D-glucosamine biosynthesis; UDP-N-acetyl-alpha-D-glucosamine from N-acetyl-alpha-D-glucosamine 1-phosphate: step 1/1. It participates in bacterial outer membrane biogenesis; LPS lipid A biosynthesis. In terms of biological role, catalyzes the last two sequential reactions in the de novo biosynthetic pathway for UDP-N-acetylglucosamine (UDP-GlcNAc). The C-terminal domain catalyzes the transfer of acetyl group from acetyl coenzyme A to glucosamine-1-phosphate (GlcN-1-P) to produce N-acetylglucosamine-1-phosphate (GlcNAc-1-P), which is converted into UDP-GlcNAc by the transfer of uridine 5-monophosphate (from uridine 5-triphosphate), a reaction catalyzed by the N-terminal domain. In Photorhabdus laumondii subsp. laumondii (strain DSM 15139 / CIP 105565 / TT01) (Photorhabdus luminescens subsp. laumondii), this protein is Bifunctional protein GlmU.